The chain runs to 474 residues: L-arabinose isomerase (474 aa).

Glutamate 306, glutamate 331, histidine 348, and histidine 447 together coordinate Mn(2+).

Belongs to the arabinose isomerase family. It depends on Mn(2+) as a cofactor.

The catalysed reaction is beta-L-arabinopyranose = L-ribulose. Its pathway is carbohydrate degradation; L-arabinose degradation via L-ribulose; D-xylulose 5-phosphate from L-arabinose (bacterial route): step 1/3. Catalyzes the conversion of L-arabinose to L-ribulose. This chain is L-arabinose isomerase, found in Leuconostoc mesenteroides subsp. mesenteroides (strain ATCC 8293 / DSM 20343 / BCRC 11652 / CCM 1803 / JCM 6124 / NCDO 523 / NBRC 100496 / NCIMB 8023 / NCTC 12954 / NRRL B-1118 / 37Y).